The primary structure comprises 504 residues: Maturase K (504 aa).

It belongs to the intron maturase 2 family. MatK subfamily.

It is found in the plastid. The protein localises to the chloroplast. Usually encoded in the trnK tRNA gene intron. Probably assists in splicing its own and other chloroplast group II introns. This Quercus robur (English oak) protein is Maturase K.